We begin with the raw amino-acid sequence, 759 residues long: Protein zyg-11 homolog A (759 aa).

LRR repeat units lie at residues 204 to 227 (LPRLESLDISNTLVTDISALLTCK), 235 to 260 (MHYLKCLAMTKSQILAVIRELKCLLH), and 490 to 513 (VTSILALQLSPEQTAQLEELFMAV).

This sequence belongs to the zyg-11 family.

Probably acts as a target recruitment subunit in an E3 ubiquitin ligase complex ZYGA-CUL2-elongin BC. In Homo sapiens (Human), this protein is Protein zyg-11 homolog A (ZYG11A).